Consider the following 330-residue polypeptide: G-protein coupled bile acid receptor 1 (330 aa).

Topologically, residues 1–19 (MTPNSTGEVPSPIPKGALG) are extracellular. N4 is a glycosylation site (N-linked (GlcNAc...) asparagine). A helical membrane pass occupies residues 20-40 (LSLALASLIITANLLLALGIA). Over 41–50 (WDRRLRSPPA) the chain is Cytoplasmic. Residues 51–71 (GCFFLSLLLAGLLTGLALPTL) traverse the membrane as a helical segment. The Extracellular segment spans residues 72 to 85 (PGLWNQSRRGYWSC). N76 is a glycosylation site (N-linked (GlcNAc...) asparagine). The cysteines at positions 85 and 155 are disulfide-linked. Residues 86–106 (LLVYLAPNFSFLSLLANLLLV) traverse the membrane as a helical segment. The Cytoplasmic portion of the chain corresponds to 107 to 125 (HGERYMAVLRPLQPPGSIR). The helical transmembrane segment at 126–146 (LALLLTWAGPLLFASLPALGW) threads the bilayer. Topologically, residues 147–165 (NHWTPGANCSSQAIFPAPY) are extracellular. Residues 166–186 (LYLEVYGLLLPAVGAAAFLSV) form a helical membrane-spanning segment. At 187 to 228 (RVLATAHRQLQDICRLERAVCRDEPSALARALTWRQARAQAG) the chain is on the cytoplasmic side. The helical transmembrane segment at 229–249 (AMLLFGLCWGPYVATLLLSVL) threads the bilayer. Residues 250–261 (AYEQRPPLGPGT) lie on the Extracellular side of the membrane. Residues 262-282 (LLSLLSLGSASAAAVPVAMGL) form a helical membrane-spanning segment. The Cytoplasmic segment spans residues 283–330 (GDQRYTAPWRAAAQRCLQGLWGRASRDSPGPSIAYHPSSQSSVDLDLN). The interval 309–330 (DSPGPSIAYHPSSQSSVDLDLN) is disordered. Polar residues predominate over residues 319-330 (PSSQSSVDLDLN).

It belongs to the G-protein coupled receptor 1 family. As to expression, ubiquitously expressed. Expressed at higher level in spleen and placenta. Expressed at lower level in other tissues. In digestive tissues, it is expressed in stomach, duodenum, ileocecum, ileum, jejunum, ascending colon, transverse colon, descending colon, cecum and liver, but not in esophagus and rectum.

It is found in the cell membrane. Functionally, receptor for bile acid. Bile acid-binding induces its internalization, activation of extracellular signal-regulated kinase and intracellular cAMP production. May be involved in the suppression of macrophage functions by bile acids. The protein is G-protein coupled bile acid receptor 1 (GPBAR1) of Homo sapiens (Human).